We begin with the raw amino-acid sequence, 407 residues long: MGEFNEYDDIDDFFCNDISPLHDEADEFGSTDIALPSQLYGKGPKPRAGESKALRDRNKESGSGTESEAKGDTLATKRGRSSWRRGASESSRSSSLGSSSPSDSSSGRSLSPVRPAKRKRTDEQQPESEANRFLAEMERDIELSAGPGGGETATGKGGRDTDARVYNVGFISRIEGSRNRRVNVKVTGQKQFATFLAIALAAFSKQHNIRKSLKPKYQADQVKIYREGVEVFKFMTCDSFNIEEPYNASATDIEVYIVPVDEATAFEQEWKRKFEERVRMLSNSSFLEVMDDIEDDNDDFLVNEYEKALVNARSLNETELAVREGTPADESSQLLKIVLLGSDNKKVFIHVRPTTTLLKVAEHYRVAKELPPTVQLSLMFDHEEIDLDDTICNIDIEDGDIIEVVVK.

Residues 19 to 130 (SPLHDEADEF…TDEQQPESEA (112 aa)) form a disordered region. Residues 47 to 60 (RAGESKALRDRNKE) are compositionally biased toward basic and acidic residues. Low complexity predominate over residues 84–111 (RRGASESSRSSSLGSSSPSDSSSGRSLS). 2 SUMO-like region repeats span residues 129–253 (EANR…ATDI) and 334–407 (LLKI…VVVK).

In terms of assembly, component of a cullin-RING ligase (CRL)-like complex composed of at least the cullin RTT101, a linker protein MMS1, and the potential substrate receptor ESC2.

The protein resides in the cytoplasm. Its subcellular location is the nucleus. May be a substrate targeting component of a cullin-RING-based E3 ubiquitin-protein ligase complex RTT101(MMS1-ESC2). Involved in HMR and telomere silencing via the recruitment or stabilizing of the SIR (silent information regulators) complex. This is Protein ESC2 (ESC2) from Eremothecium gossypii (strain ATCC 10895 / CBS 109.51 / FGSC 9923 / NRRL Y-1056) (Yeast).